Consider the following 105-residue polypeptide: Large ribosomal subunit protein uL24 (105 aa).

This sequence belongs to the universal ribosomal protein uL24 family. In terms of assembly, part of the 50S ribosomal subunit.

In terms of biological role, one of two assembly initiator proteins, it binds directly to the 5'-end of the 23S rRNA, where it nucleates assembly of the 50S subunit. One of the proteins that surrounds the polypeptide exit tunnel on the outside of the subunit. The protein is Large ribosomal subunit protein uL24 of Clostridium botulinum (strain 657 / Type Ba4).